Here is a 508-residue protein sequence, read N- to C-terminus: DNA-directed RNA polymerase subunit Rpo1C (508 aa).

The interval 1 to 123 (MASLLWRDTS…EIKEKYGENL (123 aa)) is unknown. Positions 124–508 (SEDVQKVLDD…IYKGYPKTKK (385 aa)) are DNA-directed RNA polymerase subunit Rpo1C.

This sequence belongs to the RNA polymerase beta' chain family. As to quaternary structure, part of the RNA polymerase complex.

The protein localises to the cytoplasm. The catalysed reaction is RNA(n) + a ribonucleoside 5'-triphosphate = RNA(n+1) + diphosphate. DNA-dependent RNA polymerase (RNAP) catalyzes the transcription of DNA into RNA using the four ribonucleoside triphosphates as substrates. Forms part of the jaw domain. This chain is DNA-directed RNA polymerase subunit Rpo1C, found in Thermoplasma acidophilum (strain ATCC 25905 / DSM 1728 / JCM 9062 / NBRC 15155 / AMRC-C165).